Here is a 272-residue protein sequence, read N- to C-terminus: Insertion element IS600 uncharacterized 31 kDa protein (272 aa).

In terms of domain architecture, Integrase catalytic spans 105 to 268 (APTAPNQVWV…SPAAFREKYH (164 aa)).

This Shigella sonnei protein is Insertion element IS600 uncharacterized 31 kDa protein.